The chain runs to 194 residues: dITP/XTP pyrophosphatase (194 aa).

9–14 is a substrate binding site; sequence THNPGK. Aspartate 40 and aspartate 69 together coordinate Mg(2+). The active-site Proton acceptor is aspartate 69. Substrate is bound by residues serine 70, 152 to 155, lysine 175, and 180 to 181; these read FGYD and HR.

The protein belongs to the HAM1 NTPase family. In terms of assembly, homodimer. It depends on Mg(2+) as a cofactor.

It carries out the reaction XTP + H2O = XMP + diphosphate + H(+). The catalysed reaction is dITP + H2O = dIMP + diphosphate + H(+). It catalyses the reaction ITP + H2O = IMP + diphosphate + H(+). Its function is as follows. Pyrophosphatase that catalyzes the hydrolysis of nucleoside triphosphates to their monophosphate derivatives, with a high preference for the non-canonical purine nucleotides XTP (xanthosine triphosphate), dITP (deoxyinosine triphosphate) and ITP. Seems to function as a house-cleaning enzyme that removes non-canonical purine nucleotides from the nucleotide pool, thus preventing their incorporation into DNA/RNA and avoiding chromosomal lesions. This is dITP/XTP pyrophosphatase from Caulobacter vibrioides (strain ATCC 19089 / CIP 103742 / CB 15) (Caulobacter crescentus).